Consider the following 429-residue polypeptide: UDP-N-acetylglucosamine 1-carboxyvinyltransferase (429 aa).

22–23 contributes to the phosphoenolpyruvate binding site; it reads KN. Residue Arg102 coordinates UDP-N-acetyl-alpha-D-glucosamine. The Proton donor role is filled by Cys126. Cys126 carries the 2-(S-cysteinyl)pyruvic acid O-phosphothioketal modification. UDP-N-acetyl-alpha-D-glucosamine contacts are provided by residues 131–135, 171–174, Asp316, and Ile338; these read RPVDL and KVSV.

The protein belongs to the EPSP synthase family. MurA subfamily.

The protein resides in the cytoplasm. The catalysed reaction is phosphoenolpyruvate + UDP-N-acetyl-alpha-D-glucosamine = UDP-N-acetyl-3-O-(1-carboxyvinyl)-alpha-D-glucosamine + phosphate. The protein operates within cell wall biogenesis; peptidoglycan biosynthesis. In terms of biological role, cell wall formation. Adds enolpyruvyl to UDP-N-acetylglucosamine. This chain is UDP-N-acetylglucosamine 1-carboxyvinyltransferase, found in Brucella abortus (strain S19).